A 140-amino-acid chain; its full sequence is uncharacterized protein (140 aa).

Residues 26–80 form the HTH cro/C1-type domain; it reads IRSQRETAHVSMRQLAERSGVSNPYLSQVERGLRKPSADVLSQIAKALRVSAEVL. Residues 37 to 56 constitute a DNA-binding region (H-T-H motif); the sequence is MRQLAERSGVSNPYLSQVER.

This is an uncharacterized protein from Mycobacterium tuberculosis (strain ATCC 25618 / H37Rv).